A 144-amino-acid polypeptide reads, in one-letter code: Small ribosomal subunit protein uS12 (144 aa).

Position 103 is a 3-methylthioaspartic acid (Asp-103). The segment at 121–144 is disordered; the sequence is VANRKQGRSKYGTKKASAVPAKKK.

This sequence belongs to the universal ribosomal protein uS12 family. As to quaternary structure, part of the 30S ribosomal subunit. Contacts proteins S8 and S17. May interact with IF1 in the 30S initiation complex.

Its function is as follows. With S4 and S5 plays an important role in translational accuracy. Interacts with and stabilizes bases of the 16S rRNA that are involved in tRNA selection in the A site and with the mRNA backbone. Located at the interface of the 30S and 50S subunits, it traverses the body of the 30S subunit contacting proteins on the other side and probably holding the rRNA structure together. The combined cluster of proteins S8, S12 and S17 appears to hold together the shoulder and platform of the 30S subunit. This Roseiflexus castenholzii (strain DSM 13941 / HLO8) protein is Small ribosomal subunit protein uS12.